The following is a 314-amino-acid chain: Lipoyl synthase (314 aa).

[4Fe-4S] cluster is bound by residues C40, C45, C51, C67, C71, C74, and S280. In terms of domain architecture, Radical SAM core spans 53-269; that stretch reads SERKTATFMI…KNIALEKGFS (217 aa).

Belongs to the radical SAM superfamily. Lipoyl synthase family. Requires [4Fe-4S] cluster as cofactor.

It is found in the cytoplasm. It catalyses the reaction [[Fe-S] cluster scaffold protein carrying a second [4Fe-4S](2+) cluster] + N(6)-octanoyl-L-lysyl-[protein] + 2 oxidized [2Fe-2S]-[ferredoxin] + 2 S-adenosyl-L-methionine + 4 H(+) = [[Fe-S] cluster scaffold protein] + N(6)-[(R)-dihydrolipoyl]-L-lysyl-[protein] + 4 Fe(3+) + 2 hydrogen sulfide + 2 5'-deoxyadenosine + 2 L-methionine + 2 reduced [2Fe-2S]-[ferredoxin]. Its pathway is protein modification; protein lipoylation via endogenous pathway; protein N(6)-(lipoyl)lysine from octanoyl-[acyl-carrier-protein]. In terms of biological role, catalyzes the radical-mediated insertion of two sulfur atoms into the C-6 and C-8 positions of the octanoyl moiety bound to the lipoyl domains of lipoate-dependent enzymes, thereby converting the octanoylated domains into lipoylated derivatives. The protein is Lipoyl synthase of Oceanobacillus iheyensis (strain DSM 14371 / CIP 107618 / JCM 11309 / KCTC 3954 / HTE831).